A 170-amino-acid polypeptide reads, in one-letter code: Cathelicidin antimicrobial peptide (170 aa).

The first 30 residues, 1–30 (MKTQRDGPSLGRWSLVLLLLGLVMPLAIVA), serve as a signal peptide directing secretion. Positions 31-131 (QVLSYQEAVL…DISCDKDNRR (101 aa)) are cleaved as a propeptide — cathelin-like domain (CLD). Cystine bridges form between cysteine 86–cysteine 97 and cysteine 108–cysteine 125. The tract at residues 150–162 (LKKIGQKIKDFLG) is active core.

Belongs to the cathelicidin family. Monomer, homodimer or homotrimer (in vitro). Oligomerizes as tetra- or hexamer in solution (in vitro). Post-translationally, proteolytically cleaved by proteinase PRTN3 into antibacterial peptide LL-37. Proteolytically cleaved by cathepsin CTSG and neutrophil elastase ELANE. In terms of processing, resistant to proteolytic degradation in solution, and when bound to both zwitterionic (mimicking mammalian membranes) and negatively charged membranes (mimicking bacterial membranes). After secretion onto the skin surface, the CAMP gene product is processed by a serine protease-dependent mechanism into multiple novel antimicrobial peptides distinct from and shorter than cathelicidin LL-37. These peptides show enhanced antimicrobial action, acquiring the ability to kill skin pathogens such as S.aureus, E.coli and C.albicans. These peptides have lost the ability to stimulate CXCL8/IL8 release from keratinocytes. The peptides act synergistically, killing bacteria at lower concentrations when present together, and maintain activity at increased salt condition.

It is found in the secreted. The protein resides in the vesicle. Functionally, antimicrobial protein that is an integral component of the innate immune system. Binds to bacterial lipopolysaccharides (LPS). Acts via neutrophil N-formyl peptide receptors to enhance the release of CXCL2. Postsecretory processing generates multiple cathelicidin antimicrobial peptides with various lengths which act as a topical antimicrobial defense in sweat on skin. The unprocessed precursor form, cathelicidin antimicrobial peptide, inhibits the growth of Gram-negative E.coli and E.aerogenes with efficiencies comparable to that of the mature peptide LL-37 (in vitro). In terms of biological role, antimicrobial peptide that is an integral component of the innate immune system. Binds to bacterial lipopolysaccharides (LPS). Causes membrane permeabilization by forming transmembrane pores (in vitro). Causes lysis of E.coli. Exhibits antimicrobial activity against Gram-negative bacteria such as P.aeruginosa, S.typhimurium, E.aerogenes, E.coli and P.syringae, Gram-positive bacteria such as L.monocytogenes, S.epidermidis, S.pyogenes and S.aureus, as well as vancomycin-resistant enterococci (in vitro). Exhibits antimicrobial activity against methicillin-resistant S.aureus, P.mirabilis, and C.albicans in low-salt media, but not in media containing 100 mM NaCl (in vitro). Forms chiral supramolecular assemblies with quinolone signal (PQS) molecules of P.aeruginosa, which may lead to interference of bacterial quorum signaling and perturbance of bacterial biofilm formation. May form supramolecular fiber-like assemblies on bacterial membranes. Induces cytokine and chemokine producation as well as TNF/TNFA and CSF2/GMCSF production in normal human keratinocytes. Exhibits hemolytic activity against red blood cells. Exhibits antimicrobial activity against E.coli and B.megaterium (in vitro). The chain is Cathelicidin antimicrobial peptide from Chlorocebus aethiops (Green monkey).